We begin with the raw amino-acid sequence, 692 residues long: Elongation factor G (692 aa).

A tr-type G domain is found at 8–282 (PNTRNIGIMA…NVVAYLPSPV (275 aa)). GTP contacts are provided by residues 17 to 24 (AHIDAGKT), 81 to 85 (DTPGH), and 135 to 138 (NKMD).

The protein belongs to the TRAFAC class translation factor GTPase superfamily. Classic translation factor GTPase family. EF-G/EF-2 subfamily.

It localises to the cytoplasm. In terms of biological role, catalyzes the GTP-dependent ribosomal translocation step during translation elongation. During this step, the ribosome changes from the pre-translocational (PRE) to the post-translocational (POST) state as the newly formed A-site-bound peptidyl-tRNA and P-site-bound deacylated tRNA move to the P and E sites, respectively. Catalyzes the coordinated movement of the two tRNA molecules, the mRNA and conformational changes in the ribosome. The sequence is that of Elongation factor G from Brevibacillus brevis (strain 47 / JCM 6285 / NBRC 100599).